A 54-amino-acid chain; its full sequence is UPF0391 membrane protein pRL90066 (54 aa).

A run of 2 helical transmembrane segments spans residues 5-25 and 28-48; these read ALVF…GIAG and ASIA…SLVM.

This sequence belongs to the UPF0391 family.

It is found in the cell membrane. The protein is UPF0391 membrane protein pRL90066 of Rhizobium johnstonii (strain DSM 114642 / LMG 32736 / 3841) (Rhizobium leguminosarum bv. viciae).